Reading from the N-terminus, the 353-residue chain is MTAILERRESTSVWARFCDWVTSTENRLYIGWFGVLMIPLLLTATSVFIIGFIAAPPVDIDGIREPVSGSLLFGNNIISGAIIPSSAAIGIHFYPIWEAASIDEWLYNGGCYELIVLHFLLGVACYMGREWELSFRLGMRPWIAVAYSAPVAAATAVFLIYPIGQGSFSDGMPLGISGTFNFMIVFQAEHNILMHPFHMLGVAGVFGGSLFSAMHGSLVTSSLIRETTENESANAGYKFGQEEETYNIVAAHGYFGRLIFQYASFNNSRSLHFFLAAWPVVCIWFTALGVSTMAFNLNGFNFNQSVVDSQGRVINTWADIINRANLGMEVMHERNAHNFPLDLASVDAPAVQG.

N-acetylthreonine is present on Thr2. Thr2 is subject to Phosphothreonine. Helical transmembrane passes span 29–46 (YIGW…TATS), 118–133 (HFLL…EWEL), and 142–156 (WIAV…AATA). His118 is a chlorophyll a binding site. Tyr126 is a pheophytin a binding site. The [CaMn4O5] cluster site is built by Asp170 and Glu189. The helical transmembrane segment at 197-218 (FHMLGVAGVFGGSLFSAMHGSL) threads the bilayer. A chlorophyll a-binding site is contributed by His198. A quinone-binding positions include His215 and 264 to 265 (SF). His215 is a binding site for Fe cation. Residue His272 coordinates Fe cation. Residues 274 to 288 (FLAAWPVVCIWFTAL) form a helical membrane-spanning segment. Residues His332, Glu333, Asp342, and Ala344 each coordinate [CaMn4O5] cluster. Positions 345-353 (SVDAPAVQG) are excised as a propeptide.

Belongs to the reaction center PufL/M/PsbA/D family. As to quaternary structure, PSII is composed of 1 copy each of membrane proteins PsbA, PsbB, PsbC, PsbD, PsbE, PsbF, PsbH, PsbI, PsbJ, PsbK, PsbL, PsbM, PsbT, PsbX, PsbY, PsbZ, Psb30/Ycf12, at least 3 peripheral proteins of the oxygen-evolving complex and a large number of cofactors. It forms dimeric complexes. Requires The D1/D2 heterodimer binds P680, chlorophylls that are the primary electron donor of PSII, and subsequent electron acceptors. It shares a non-heme iron and each subunit binds pheophytin, quinone, additional chlorophylls, carotenoids and lipids. D1 provides most of the ligands for the Mn4-Ca-O5 cluster of the oxygen-evolving complex (OEC). There is also a Cl(-1) ion associated with D1 and D2, which is required for oxygen evolution. The PSII complex binds additional chlorophylls, carotenoids and specific lipids. as cofactor. Post-translationally, tyr-161 forms a radical intermediate that is referred to as redox-active TyrZ, YZ or Y-Z. C-terminally processed by CTPA; processing is essential to allow assembly of the oxygen-evolving complex and thus photosynthetic growth.

It localises to the plastid. Its subcellular location is the chloroplast thylakoid membrane. It carries out the reaction 2 a plastoquinone + 4 hnu + 2 H2O = 2 a plastoquinol + O2. Functionally, photosystem II (PSII) is a light-driven water:plastoquinone oxidoreductase that uses light energy to abstract electrons from H(2)O, generating O(2) and a proton gradient subsequently used for ATP formation. It consists of a core antenna complex that captures photons, and an electron transfer chain that converts photonic excitation into a charge separation. The D1/D2 (PsbA/PsbD) reaction center heterodimer binds P680, the primary electron donor of PSII as well as several subsequent electron acceptors. The chain is Photosystem II protein D1 from Nephroselmis olivacea (Green alga).